The primary structure comprises 565 residues: NAD-dependent malic enzyme (565 aa).

Residue Tyr104 is the Proton donor of the active site. Arg157 contacts NAD(+). The active-site Proton acceptor is Lys175. The a divalent metal cation site is built by Glu246, Asp247, and Asp270. NAD(+)-binding residues include Asp270 and Asn418.

This sequence belongs to the malic enzymes family. In terms of assembly, homotetramer. The cofactor is Mg(2+). Requires Mn(2+) as cofactor.

The catalysed reaction is (S)-malate + NAD(+) = pyruvate + CO2 + NADH. It catalyses the reaction oxaloacetate + H(+) = pyruvate + CO2. The sequence is that of NAD-dependent malic enzyme from Escherichia coli O127:H6 (strain E2348/69 / EPEC).